The primary structure comprises 178 residues: Cytochrome b6-f complex iron-sulfur subunit (178 aa).

A helical membrane pass occupies residues 20–42 (LLTFGTATGVALGALYPVANYFM). The region spanning 65-161 (KTGWLATHQA…VDIEDDAVLV (97 aa)) is the Rieske domain. C107, H109, C125, and H128 together coordinate [2Fe-2S] cluster. C112 and C127 form a disulfide bridge.

Belongs to the Rieske iron-sulfur protein family. The 4 large subunits of the cytochrome b6-f complex are cytochrome b6, subunit IV (17 kDa polypeptide, PetD), cytochrome f and the Rieske protein, while the 4 small subunits are PetG, PetL, PetM and PetN. The complex functions as a dimer. It depends on [2Fe-2S] cluster as a cofactor.

The protein resides in the cellular thylakoid membrane. It catalyses the reaction 2 oxidized [plastocyanin] + a plastoquinol + 2 H(+)(in) = 2 reduced [plastocyanin] + a plastoquinone + 4 H(+)(out). Its function is as follows. Component of the cytochrome b6-f complex, which mediates electron transfer between photosystem II (PSII) and photosystem I (PSI), cyclic electron flow around PSI, and state transitions. The polypeptide is Cytochrome b6-f complex iron-sulfur subunit (Prochlorococcus marinus (strain MIT 9301)).